A 403-amino-acid polypeptide reads, in one-letter code: 1-deoxy-D-xylulose 5-phosphate reductoisomerase (403 aa).

NADPH-binding residues include T18, G19, S20, I21, Q46, and N132. Position 133 (K133) interacts with 1-deoxy-D-xylulose 5-phosphate. Residue E134 coordinates NADPH. A Mn(2+)-binding site is contributed by D158. S159, E160, S189, and H212 together coordinate 1-deoxy-D-xylulose 5-phosphate. E160 serves as a coordination point for Mn(2+). G218 provides a ligand contact to NADPH. Residues S225, N230, K231, and E234 each coordinate 1-deoxy-D-xylulose 5-phosphate. Residue E234 participates in Mn(2+) binding.

Belongs to the DXR family. Mg(2+) serves as cofactor. It depends on Mn(2+) as a cofactor.

It catalyses the reaction 2-C-methyl-D-erythritol 4-phosphate + NADP(+) = 1-deoxy-D-xylulose 5-phosphate + NADPH + H(+). It functions in the pathway isoprenoid biosynthesis; isopentenyl diphosphate biosynthesis via DXP pathway; isopentenyl diphosphate from 1-deoxy-D-xylulose 5-phosphate: step 1/6. Its function is as follows. Catalyzes the NADPH-dependent rearrangement and reduction of 1-deoxy-D-xylulose-5-phosphate (DXP) to 2-C-methyl-D-erythritol 4-phosphate (MEP). This is 1-deoxy-D-xylulose 5-phosphate reductoisomerase from Aromatoleum aromaticum (strain DSM 19018 / LMG 30748 / EbN1) (Azoarcus sp. (strain EbN1)).